The following is a 222-amino-acid chain: Putative cobalt transport protein CbiM (222 aa).

6 consecutive transmembrane segments (helical) span residues 8–28 (LPME…GYGI), 43–63 (PLLA…LPSV), 75–95 (LGAI…VLLF), 107–127 (TLGA…YLVF), 134–154 (LNIT…TYLT), and 178–198 (IFAI…ALLW).

This sequence belongs to the CbiM family. Forms an energy-coupling factor (ECF) transporter complex composed of an ATP-binding protein (A component, CbiO), a transmembrane protein (T component, CbiQ) and 2 possible substrate-capture proteins (S components, CbiM and CbiN) of unknown stoichimetry.

Its subcellular location is the cell membrane. Its pathway is cofactor biosynthesis; adenosylcobalamin biosynthesis. In terms of biological role, part of the energy-coupling factor (ECF) transporter complex CbiMNOQ involved in cobalt import. The protein is Putative cobalt transport protein CbiM of Methanococcus voltae (strain ATCC BAA-1334 / A3).